The chain runs to 400 residues: MKFTPPPSSLRGPLVIPDKIMMGPGPSNCSKRVLAALNNTCLSNFHDELFQVIDEVKDGLRYIFQTENRTTMCITGSAHTGMEALLCNLLEEGDIVLIANNGIWAERAINMATRYGADVRVLGGPADKPFSMTDFKKAIEQHRPKCLFVVHGDSSSGLLQPLEGLGKICHDYDCLLLVDAVASLCGVPFYMDKWEIDGVYTGSQKVLGAPPGITPISISPKALEVIRSRKTPSKVFYWDLLILGNYWGCYDEQKRYHHTVPSNLIFALREAIAQIAEEGLEPVIRRRQECAEQMYRGLQAMGLEIFVKDPEYRLPTVTCIMIPKGVNWWKVSEYAMNNFSLEIQGGFGPTMGIAWRAGIMGESSTLQRVNFYLYAFKESLKATHPDYVFEKKNGQTNGTK.

The segment at 43-44 (SN) is binds to and confers specificity for 3-hydroxykynurenine; shared with dimeric partner. Residues 77 to 79 (SAH), serine 154, and glutamine 204 contribute to the pyridoxal 5'-phosphate site. Serine 154 contributes to the substrate binding site. Lysine 205 carries the N6-(pyridoxal phosphate)lysine modification. Residues tyrosine 256 and threonine 259 each contribute to the pyridoxal 5'-phosphate site. Arginine 356 serves as a coordination point for substrate.

It belongs to the class-V pyridoxal-phosphate-dependent aminotransferase family. As to quaternary structure, homodimer. May form homotetramer. Requires pyridoxal 5'-phosphate as cofactor.

The protein localises to the peroxisome. The catalysed reaction is glyoxylate + L-alanine = glycine + pyruvate. It catalyses the reaction L-kynurenine + glyoxylate = kynurenate + glycine + H2O. The enzyme catalyses 3-hydroxy-L-kynurenine + glyoxylate = xanthurenate + glycine + H2O. It carries out the reaction 3-hydroxy-L-kynurenine + pyruvate = xanthurenate + L-alanine + H2O. The catalysed reaction is L-kynurenine + pyruvate = kynurenate + L-alanine + H2O. It catalyses the reaction 2-oxobutanoate + L-alanine = (2S)-2-aminobutanoate + pyruvate. The enzyme catalyses L-phenylalanine + pyruvate = 3-phenylpyruvate + L-alanine. It carries out the reaction L-serine + pyruvate = 3-hydroxypyruvate + L-alanine. The catalysed reaction is L-cysteine + pyruvate = 2-oxo-3-sulfanylpropanoate + L-alanine. It catalyses the reaction 3-hydroxy-L-kynurenine + oxaloacetate = 4-(2-amino-3-hydroxyphenyl)-2,4-dioxobutanoate + L-aspartate. The enzyme catalyses 3-hydroxy-L-kynurenine + 3-phenylpyruvate = 4-(2-amino-3-hydroxyphenyl)-2,4-dioxobutanoate + L-phenylalanine. It carries out the reaction L-kynurenine + oxaloacetate = 4-(2-aminophenyl)-2,4-dioxobutanoate + L-aspartate. The catalysed reaction is 3-phenylpyruvate + L-kynurenine = 4-(2-aminophenyl)-2,4-dioxobutanoate + L-phenylalanine. Its pathway is amino-acid degradation; L-kynurenine degradation; kynurenate from L-kynurenine: step 1/2. Its function is as follows. Catalyzes the pyridoxal 5'-phosphate-dependent transamination of both 3-hydroxykynurenine and L-kynurenine to xanthurenic acid and kynurenic acid, respectively, preferentially using the alpha-ketoacid pyruvate, glyoxylate or oxaloacetate as the amino group acceptor. The affinity and catalytic efficiency for 3-hydroxykynurenine is higher than for L-kynurenine. Involved in the detoxification of cytotoxic metabolite 3-hydroxykynurenine generated by the hydroxylation of L-kynurenine, an intermediate in the tryptophan catabolism pathway. Also catalyzes, although with a lesser efficiency, the transamination of alanine with glyoxylate as an amino group acceptor. May play a role in the detoxification of glyoxylate, a toxic plant metabolite from the diet. The sequence is that of 3-hydroxykynurenine transaminase from Aedes aegypti (Yellowfever mosquito).